An 810-amino-acid chain; its full sequence is Plasminogen (810 aa).

An N-terminal signal peptide occupies residues 1–19 (MEHKEVVLLLLLFLKSGQG). Residues 20–98 (EPLDDYVNTK…RDVVLFEKKV (79 aa)) form the PAN domain. Intrachain disulfides connect Cys49–Cys73, Cys53–Cys61, Cys103–Cys181, Cys124–Cys164, Cys152–Cys176, Cys185–Cys262, Cys188–Cys316, Cys206–Cys245, Cys234–Cys257, Cys275–Cys352, Cys296–Cys335, and Cys324–Cys347. Kringle domains are found at residues 103–181 (CKTG…IPEC), 184–262 (ECMH…IPRC), and 275–352 (CLKG…IPSC). Over residues 125-141 (QKWSSTSPHRPTFSPAT) the composition is skewed to polar residues. The segment at 125–145 (QKWSSTSPHRPTFSPATHPSE) is disordered. Residues Thr136, Asp158, and Arg172 each coordinate L-lysine. An O-linked (GalNAc...) threonine glycan is attached at Thr365. 9 disulfide bridges follow: Cys377–Cys454, Cys398–Cys437, Cys426–Cys449, Cys481–Cys560, Cys502–Cys543, Cys531–Cys555, Cys567–Cys685, Cys577–Cys585, and Cys607–Cys623. Kringle domains follow at residues 377–454 (CYHG…LKKC) and 481–560 (CMFG…VPQC). Asp432 and Arg445 together coordinate L-lysine. Residues 581–808 (VVGGCVAYPH…FVTWIEGVMR (228 aa)) enclose the Peptidase S1 domain. A Phosphoserine modification is found at Ser597. Residues His622 and Asp665 each act as charge relay system in the active site. Residue Ser688 is modified to Phosphoserine. Cystine bridges form between Cys699–Cys766, Cys729–Cys745, and Cys756–Cys784. Catalysis depends on Ser760, which acts as the Charge relay system.

The protein belongs to the peptidase S1 family. Plasminogen subfamily. Interacts with CSPG4 and AMOT. Interacts (via the Kringle domains) with HRG; the interaction tethers PLG to the cell surface and enhances its activation. Interacts (via Kringle 4 domain) with ADA; the interaction stimulates PLG activation when in complex with DPP4. Angiostatin: Interacts with ATP5F1A; the interaction inhibits most of the angiogenic effects of angiostatin. In the presence of the inhibitor, the activation involves only cleavage after Arg-580, yielding two chains held together by two disulfide bonds. In the absence of the inhibitor, the activation involves additionally the removal of the activation peptide.

It localises to the secreted. The enzyme catalyses Preferential cleavage: Lys-|-Xaa &gt; Arg-|-Xaa, higher selectivity than trypsin. Converts fibrin into soluble products.. Its activity is regulated as follows. Converted into plasmin by plasminogen activators, both plasminogen and its activator being bound to fibrin. Activated with catalytic amounts of streptokinase. Plasmin dissolves the fibrin of blood clots and acts as a proteolytic factor in a variety of other processes including embryonic development, tissue remodeling, tumor invasion, and inflammation. In ovulation, weakens the walls of the Graafian follicle. It activates the urokinase-type plasminogen activator, collagenases and several complement zymogens, such as C1, C4 and C5. Cleavage of fibronectin and laminin leads to cell detachment and apoptosis. Also cleaves fibrin, thrombospondin and von Willebrand factor. Its role in tissue remodeling and tumor invasion may be modulated by CSPG4. Binds to cells. The protein is Plasminogen (PLG) of Macaca mulatta (Rhesus macaque).